The sequence spans 480 residues: Protein nucleotidyltransferase YdiU (480 aa).

8 residues coordinate ATP: G86, G88, R89, K109, D121, G122, R172, and R179. Residue D248 is the Proton acceptor of the active site. 2 residues coordinate Mg(2+): N249 and D258. D258 is a binding site for ATP.

Belongs to the SELO family. Mg(2+) serves as cofactor. The cofactor is Mn(2+).

It carries out the reaction L-seryl-[protein] + ATP = 3-O-(5'-adenylyl)-L-seryl-[protein] + diphosphate. The catalysed reaction is L-threonyl-[protein] + ATP = 3-O-(5'-adenylyl)-L-threonyl-[protein] + diphosphate. It catalyses the reaction L-tyrosyl-[protein] + ATP = O-(5'-adenylyl)-L-tyrosyl-[protein] + diphosphate. The enzyme catalyses L-histidyl-[protein] + UTP = N(tele)-(5'-uridylyl)-L-histidyl-[protein] + diphosphate. It carries out the reaction L-seryl-[protein] + UTP = O-(5'-uridylyl)-L-seryl-[protein] + diphosphate. The catalysed reaction is L-tyrosyl-[protein] + UTP = O-(5'-uridylyl)-L-tyrosyl-[protein] + diphosphate. Nucleotidyltransferase involved in the post-translational modification of proteins. It can catalyze the addition of adenosine monophosphate (AMP) or uridine monophosphate (UMP) to a protein, resulting in modifications known as AMPylation and UMPylation. In Salmonella newport (strain SL254), this protein is Protein nucleotidyltransferase YdiU.